The following is a 225-amino-acid chain: PKHD-type hydroxylase YbiX (225 aa).

The region spanning 78–177 is the Fe2OG dioxygenase domain; sequence TLSTPLFNRY…RVASFMWIQS (100 aa). Positions 96, 98, and 158 each coordinate Fe cation. R168 contributes to the 2-oxoglutarate binding site.

The cofactor is Fe(2+). L-ascorbate is required as a cofactor.

This is PKHD-type hydroxylase YbiX from Shigella dysenteriae serotype 1 (strain Sd197).